The following is a 513-amino-acid chain: GMP synthase [glutamine-hydrolyzing] (513 aa).

The region spanning Leu-9–Glu-198 is the Glutamine amidotransferase type-1 domain. Cys-86 serves as the catalytic Nucleophile. Active-site residues include His-172 and Glu-174. The GMPS ATP-PPase domain occupies Trp-199–Arg-388. Ser-226 to Ser-232 contributes to the ATP binding site.

As to quaternary structure, homodimer.

The catalysed reaction is XMP + L-glutamine + ATP + H2O = GMP + L-glutamate + AMP + diphosphate + 2 H(+). The protein operates within purine metabolism; GMP biosynthesis; GMP from XMP (L-Gln route): step 1/1. Catalyzes the synthesis of GMP from XMP. The chain is GMP synthase [glutamine-hydrolyzing] from Staphylococcus saprophyticus subsp. saprophyticus (strain ATCC 15305 / DSM 20229 / NCIMB 8711 / NCTC 7292 / S-41).